Consider the following 113-residue polypeptide: Iron-sulfur cluster insertion protein ErpA (113 aa).

Residues Cys-41, Cys-105, and Cys-107 each contribute to the iron-sulfur cluster site.

It belongs to the HesB/IscA family. As to quaternary structure, homodimer. It depends on iron-sulfur cluster as a cofactor.

Required for insertion of 4Fe-4S clusters for at least IspG. This chain is Iron-sulfur cluster insertion protein ErpA, found in Actinobacillus pleuropneumoniae serotype 3 (strain JL03).